A 211-amino-acid chain; its full sequence is Ribonuclease HII (211 aa).

In terms of domain architecture, RNase H type-2 spans Q24–D211. Residues D30, E31, and D122 each coordinate a divalent metal cation.

It belongs to the RNase HII family. Requires Mn(2+) as cofactor. The cofactor is Mg(2+).

The protein localises to the cytoplasm. It carries out the reaction Endonucleolytic cleavage to 5'-phosphomonoester.. In terms of biological role, endonuclease that specifically degrades the RNA of RNA-DNA hybrids. In Vibrio parahaemolyticus serotype O3:K6 (strain RIMD 2210633), this protein is Ribonuclease HII.